Here is a 98-residue protein sequence, read N- to C-terminus: Large ribosomal subunit protein uL23 (98 aa).

It belongs to the universal ribosomal protein uL23 family. As to quaternary structure, part of the 50S ribosomal subunit. Contacts protein L29, and trigger factor when it is bound to the ribosome.

In terms of biological role, one of the early assembly proteins it binds 23S rRNA. One of the proteins that surrounds the polypeptide exit tunnel on the outside of the ribosome. Forms the main docking site for trigger factor binding to the ribosome. This Cereibacter sphaeroides (strain ATCC 17029 / ATH 2.4.9) (Rhodobacter sphaeroides) protein is Large ribosomal subunit protein uL23.